The sequence spans 178 residues: Interleukin-17B (178 aa).

The signal sequence occupies residues 1-22 (MDWPHSLLFLLAISIFLGPSQP). The disordered stretch occupies residues 21 to 44 (QPRNTKGKRKGQVRPGPLAPGPHQ). A glycan (N-linked (GlcNAc...) asparagine) is linked at Asn75. 2 disulfide bridges follow: Cys121–Cys176 and Cys126–Cys178.

Belongs to the IL-17 family.

The protein localises to the secreted. Functionally, stimulates the release of tumor necrosis factor alpha and IL-1-beta from the monocytic cell line THP-1. The chain is Interleukin-17B (IL17B) from Mesocricetus auratus (Golden hamster).